The chain runs to 81 residues: ATP synthase subunit c, chloroplastic (81 aa).

2 helical membrane passes run 3-23 and 57-77; these read PLISAASVIAAGLAVGLASIG and LAFMEALTIYGLVVALALLFA.

Belongs to the ATPase C chain family. As to quaternary structure, F-type ATPases have 2 components, F(1) - the catalytic core - and F(0) - the membrane proton channel. F(1) has five subunits: alpha(3), beta(3), gamma(1), delta(1), epsilon(1). F(0) has four main subunits: a(1), b(1), b'(1) and c(10-14). The alpha and beta chains form an alternating ring which encloses part of the gamma chain. F(1) is attached to F(0) by a central stalk formed by the gamma and epsilon chains, while a peripheral stalk is formed by the delta, b and b' chains.

Its subcellular location is the plastid. It localises to the chloroplast thylakoid membrane. Functionally, f(1)F(0) ATP synthase produces ATP from ADP in the presence of a proton or sodium gradient. F-type ATPases consist of two structural domains, F(1) containing the extramembraneous catalytic core and F(0) containing the membrane proton channel, linked together by a central stalk and a peripheral stalk. During catalysis, ATP synthesis in the catalytic domain of F(1) is coupled via a rotary mechanism of the central stalk subunits to proton translocation. Key component of the F(0) channel; it plays a direct role in translocation across the membrane. A homomeric c-ring of between 10-14 subunits forms the central stalk rotor element with the F(1) delta and epsilon subunits. The sequence is that of ATP synthase subunit c, chloroplastic from Ipomoea purpurea (Common morning glory).